The chain runs to 257 residues: Pantothenate synthetase (257 aa).

29 to 36 (MGNLHAGH) provides a ligand contact to ATP. The Proton donor role is filled by His-36. (R)-pantoate is bound at residue Gln-60. Gln-60 is a binding site for beta-alanine. 145 to 148 (GEKD) is a binding site for ATP. Residue Gln-151 participates in (R)-pantoate binding. ATP is bound by residues Val-174 and 182–185 (LSSR).

Belongs to the pantothenate synthetase family. In terms of assembly, homodimer.

The protein resides in the cytoplasm. It carries out the reaction (R)-pantoate + beta-alanine + ATP = (R)-pantothenate + AMP + diphosphate + H(+). Its pathway is cofactor biosynthesis; (R)-pantothenate biosynthesis; (R)-pantothenate from (R)-pantoate and beta-alanine: step 1/1. Catalyzes the condensation of pantoate with beta-alanine in an ATP-dependent reaction via a pantoyl-adenylate intermediate. The chain is Pantothenate synthetase from Coxiella burnetii (strain Dugway 5J108-111).